The following is a 240-amino-acid chain: Uridylate kinase (240 aa).

14–17 (KLSG) is an ATP binding site. Residue Gly56 participates in UMP binding. ATP is bound by residues Gly57 and Arg61. UMP-binding positions include Asp76 and 137 to 144 (TGNPFFTT). ATP contacts are provided by Thr164, Tyr170, and Asp173.

This sequence belongs to the UMP kinase family. Homohexamer.

The protein resides in the cytoplasm. The enzyme catalyses UMP + ATP = UDP + ADP. Its pathway is pyrimidine metabolism; CTP biosynthesis via de novo pathway; UDP from UMP (UMPK route): step 1/1. Its activity is regulated as follows. Inhibited by UTP. Catalyzes the reversible phosphorylation of UMP to UDP. This is Uridylate kinase from Verminephrobacter eiseniae (strain EF01-2).